A 415-amino-acid polypeptide reads, in one-letter code: MAIQAQKGTKDMLPNDAYKWHYIEEKLRKISAEYGIREIRTPMFEATELFKRGVGETTDVVQKEMYTFEDKGGRSITLKPEGTAPAVRAFIENSLYADAQPTKMFYFTPCFRYEKMQKGRLREFHQYGIEVFGSQEASIDAEILSLVMRALTEDFGIKGLSLNINSLGCPKCRAKFNEALKQYLKENYDNLCETCKTRFEKNPMRIIDCKEKRCKEIVKEAPSILDYICEECSDHFSKLKAYLDVMGIEYNIDPQIVRGLDYYSKTVFEVIKDGLTVCGGGRYDYLVEEVDGPKTPAMGFGLGLERLLLILDEEGIEIPEPVRCEVYIGSMGDRAKLEAMKLAFNLRKSGIKAEIDHLGKSVKAQMKYANKIGAKYTFVIGDSEIEENKIKIKRMSDGEQFEVSLDINEIVNIVK.

The protein belongs to the class-II aminoacyl-tRNA synthetase family. Homodimer.

The protein localises to the cytoplasm. It carries out the reaction tRNA(His) + L-histidine + ATP = L-histidyl-tRNA(His) + AMP + diphosphate + H(+). This Clostridium perfringens (strain SM101 / Type A) protein is Histidine--tRNA ligase.